The primary structure comprises 149 residues: Probable flagellum biosynthesis repressor protein FlbT (149 aa).

It belongs to the FlbT family.

In terms of biological role, has a post-transcriptional repressor function in flagellum biogenesis. Associates with the 5'-UTR of fljK mRNA and promotes its degradation. The sequence is that of Probable flagellum biosynthesis repressor protein FlbT from Rhizobium etli (strain ATCC 51251 / DSM 11541 / JCM 21823 / NBRC 15573 / CFN 42).